Here is a 243-residue protein sequence, read N- to C-terminus: Uridylate kinase (243 aa).

15-18 is an ATP binding site; that stretch reads KLSG. G56 provides a ligand contact to UMP. Residues G57 and R61 each coordinate ATP. UMP is bound at residue 138-145; it reads TGNPYFST. ATP contacts are provided by N166, Y172, and D175.

It belongs to the UMP kinase family. Homohexamer.

The protein resides in the cytoplasm. The enzyme catalyses UMP + ATP = UDP + ADP. Its pathway is pyrimidine metabolism; CTP biosynthesis via de novo pathway; UDP from UMP (UMPK route): step 1/1. Its activity is regulated as follows. Inhibited by UTP. Its function is as follows. Catalyzes the reversible phosphorylation of UMP to UDP. This is Uridylate kinase from Mycoplasma genitalium (strain ATCC 33530 / DSM 19775 / NCTC 10195 / G37) (Mycoplasmoides genitalium).